A 1969-amino-acid chain; its full sequence is Myosin-3 (1969 aa).

One can recognise a Myosin N-terminal SH3-like domain in the interval 33-82 (DSKKNCWIPDPEDGFVAAEIQSTTGEQVTVVTVKGNQITVKKDQCQEMNP). Residues 86 to 791 (DKTEDMANLT…VLAKLEDLRD (706 aa)) enclose the Myosin motor domain. Lys-130 carries the N6,N6,N6-trimethyllysine modification. 179–186 (GESGAGKT) lines the ATP pocket. Actin-binding stretches follow at residues 667 to 689 (LNNLMNMLYQTHPHFIRCIIPNE) and 770 to 784 (KVGETKIFFKAGVLA). Positions 794–823 (LSRIVTMFQSRIRSYLAKAEVRRRYEQQTG) constitute an IQ domain. A coiled-coil region spans residues 857-1969 (KEQEAMGELA…IRSSSNARFL (1113 aa)). Disordered regions lie at residues 942-966 (MQERNEDLARQKKKTDQELSDTKKH), 1006-1029 (NKEKKHQEESNRKLNEDLQSEEDK), 1131-1213 (LEEE…GDSV), and 1234-1255 (KSKLQRDLEESQHATDSEVRSR). Basic and acidic residues-rich tracts occupy residues 1137–1164 (AERNSRQKSDRSRSEAERELEELTERLE) and 1176–1197 (ANKKREAEIAKLRREKEEDSLN).

The protein belongs to the TRAFAC class myosin-kinesin ATPase superfamily. Myosin family. Muscle myosin is a hexameric protein that consists of 2 heavy chain subunits (MHC), 2 alkali light chain subunits (MLC) and 2 regulatory light chain subunits (MLC-2). As to expression, expressed in body wall muscles, neighboring vulval muscle cells and the contractile sheath covering the hermaphrodite gonad (myoepithelial sheath cells).

It localises to the cytoplasm. The protein localises to the myofibril. Its subcellular location is the sarcomere. The protein resides in the a band. In terms of biological role, essential for muscle contraction. Involved in ovulation likely by regulating the contraction of gonadal myoepithelial sheath cells. This chain is Myosin-3 (myo-3), found in Caenorhabditis elegans.